The following is a 383-amino-acid chain: Probable cytosolic iron-sulfur protein assembly protein 1 (383 aa).

WD repeat units lie at residues 10-49 (AHNDKVWSVSVHPTLPIIATASTDKSTKLYKLSARQKFPL), 56-108 (THKR…VEYD), 135-175 (GHEN…EEFE), 182-221 (DHSQDVKNVSWHPSMNILASSSYDDTIRIYQQDIAGDEWS), 228-275 (GHEG…EDDE), 302-341 (VHKYPVYSVAWSALTGKIASAGSDGKIVVYSETEKGKWVI), and 349-383 (HGVHEINCVIWAQLDDENEILVSAGDDGYVNLWKI).

It belongs to the WD repeat CIA1 family. Interacts with NAR1.

It is found in the cytoplasm. Its subcellular location is the nucleus. In terms of biological role, essential component of the cytosolic iron-sulfur (Fe/S) protein assembly machinery. Required for the maturation of extramitochondrial Fe/S proteins. The chain is Probable cytosolic iron-sulfur protein assembly protein 1 from Candida albicans (strain SC5314 / ATCC MYA-2876) (Yeast).